The following is a 175-amino-acid chain: Zinc finger protein ZAT18 (175 aa).

2 consecutive C2H2-type zinc fingers follow at residues 49-71 (FECK…RASH) and 93-115 (HKCT…MRKH). Positions 71–78 (HKKPKLIV) match the Nuclear localization signal motif. The EAR-like (transcriptional repression) motif lies at 146–152 (LDLNLTP).

Mostly expressed in stems, siliques and leaves, and, to a lower extent, in cotyledons, hypocotyls and roots.

It localises to the nucleus. In terms of biological role, transcription factor involved in stress responses. Positive regulator of the jasmonic acid (JA)- mediated signaling pathway. Triggers the up-regulation of LOX3, VSP2, PAL1 and PAL2 in a JA-dependent manner. Promotes drought and osmotic stress tolerance by preventing reactive oxygen species (ROS) production (e.g. H(2)O(2)). This chain is Zinc finger protein ZAT18, found in Arabidopsis thaliana (Mouse-ear cress).